The primary structure comprises 121 residues: Probable intron-encoded DNA endonuclease aI1 (121 aa).

The protein belongs to the LAGLIDADG endonuclease family.

It is found in the mitochondrion. Its function is as follows. Mitochondrial DNA endonuclease involved in intron homing. This Mycosarcoma maydis (Corn smut fungus) protein is Probable intron-encoded DNA endonuclease aI1 (aI1).